The sequence spans 437 residues: Replication factor C large subunit (437 aa).

Position 48-55 (48-55 (GPPGVGKT)) interacts with ATP. The disordered stretch occupies residues 410–437 (TQASKPTSEEKAEKSKKYYPKRSSSRKT). Over residues 416-425 (TSEEKAEKSK) the composition is skewed to basic and acidic residues. A compositionally biased stretch (basic residues) spans 426–437 (KYYPKRSSSRKT).

The protein belongs to the activator 1 small subunits family. RfcL subfamily. Heteromultimer composed of small subunits (RfcS) and large subunits (RfcL).

Functionally, part of the RFC clamp loader complex which loads the PCNA sliding clamp onto DNA. The sequence is that of Replication factor C large subunit from Sulfolobus acidocaldarius (strain ATCC 33909 / DSM 639 / JCM 8929 / NBRC 15157 / NCIMB 11770).